A 338-amino-acid chain; its full sequence is Lipoate-protein ligase A (338 aa).

One can recognise a BPL/LPL catalytic domain in the interval 29 to 216 (SPDQRVLFLW…AFFAYYDEQV (188 aa)). ATP contacts are provided by residues Arg-71, 76–79 (GAVF), and Lys-134. Lys-134 is a (R)-lipoate binding site.

It belongs to the LplA family. As to quaternary structure, monomer.

It localises to the cytoplasm. The enzyme catalyses L-lysyl-[lipoyl-carrier protein] + (R)-lipoate + ATP = N(6)-[(R)-lipoyl]-L-lysyl-[lipoyl-carrier protein] + AMP + diphosphate + H(+). The protein operates within protein modification; protein lipoylation via exogenous pathway; protein N(6)-(lipoyl)lysine from lipoate: step 1/2. It functions in the pathway protein modification; protein lipoylation via exogenous pathway; protein N(6)-(lipoyl)lysine from lipoate: step 2/2. Catalyzes both the ATP-dependent activation of exogenously supplied lipoate to lipoyl-AMP and the transfer of the activated lipoyl onto the lipoyl domains of lipoate-dependent enzymes. The chain is Lipoate-protein ligase A from Yersinia pseudotuberculosis serotype IB (strain PB1/+).